The primary structure comprises 1459 residues: ARF guanine-nucleotide exchange factor 2 (1459 aa).

2 positions are modified to phosphoserine: Ser-46 and Ser-284. The 145-residue stretch at 570–714 (FNEKPKKGIP…IIMLNTDLHN (145 aa)) folds into the SEC7 domain. Positions 1412–1459 (EKGNGSSSHGSAHEQTPESNDVEIEATAPIDDNTDDDNKPKLSDVEKD) are disordered. Residues 1447-1459 (DDNKPKLSDVEKD) are compositionally biased toward basic and acidic residues.

Interacts (via SEC7 domain) with DRS2 (via C-terminus); the interaction is direct. Interacts with GMH1.

The protein localises to the cytoplasm. Its subcellular location is the cytosol. It is found in the membrane. It localises to the golgi apparatus membrane. Activates the ARF proteins by exchanging bound GDP for free GTP. Plays a role in maintaining mitochondrial morphology. Stimulates DRS2 flippase activity. The protein is ARF guanine-nucleotide exchange factor 2 (GEA2) of Saccharomyces cerevisiae (strain ATCC 204508 / S288c) (Baker's yeast).